The primary structure comprises 126 residues: Aspartate 1-decarboxylase (126 aa).

Catalysis depends on S25, which acts as the Schiff-base intermediate with substrate; via pyruvic acid. A Pyruvic acid (Ser) modification is found at S25. Residue T57 coordinates substrate. The active-site Proton donor is Y58. Residue 73 to 75 coordinates substrate; sequence GAA.

Belongs to the PanD family. Heterooctamer of four alpha and four beta subunits. It depends on pyruvate as a cofactor. In terms of processing, is synthesized initially as an inactive proenzyme, which is activated by self-cleavage at a specific serine bond to produce a beta-subunit with a hydroxyl group at its C-terminus and an alpha-subunit with a pyruvoyl group at its N-terminus.

The protein localises to the cytoplasm. It carries out the reaction L-aspartate + H(+) = beta-alanine + CO2. The protein operates within cofactor biosynthesis; (R)-pantothenate biosynthesis; beta-alanine from L-aspartate: step 1/1. In terms of biological role, catalyzes the pyruvoyl-dependent decarboxylation of aspartate to produce beta-alanine. This chain is Aspartate 1-decarboxylase, found in Psychrobacter sp. (strain PRwf-1).